The chain runs to 457 residues: MQHDDTIAAIATPLGQGGIGIIRISGPASLEVLRALFRPSSSRFGGFRPWTLHHGTITDGCDPLDDVLAVHMPGPRTFTGEDVSEIHCHGGSGVLAAVLEACVRHGARYAERGEFTRRAFLNGRMDLTQAEAVAEMIAAPSREGMRLAQAKLDGLLGQRVGALRARLDALRMQLCVAVDFPEEEVECLAPEAFLAEIEAVRQGVVELSAGYARTRCWQDGALVVLAGQVNAGKSSLMNALLGRRRAIVTDLPGTTRDFIEEPLNLSGLAIRLADTAGLRETGDIVEQEGVRMSRDLVAQADLVLLVTDATQGLQGPELELLRHAGPERVLVVFNKTDLLEGRILPSTPEGCRSVHVAAASGDGVESLVTAIRAAVLAATGAGEPEAGELAPNMRQAAALDKAATILDELAGDIRAHVPYDLCGVRLDGACAALMDVTGQSTPEAILDAIFASFCIGK.

The (6S)-5-formyl-5,6,7,8-tetrahydrofolate site is built by Arg-23, Glu-85, and Arg-124. The region spanning 220–376 is the TrmE-type G domain; sequence GALVVLAGQV…LVTAIRAAVL (157 aa). A K(+)-binding site is contributed by Asn-230. GTP is bound by residues 230-235, 249-255, and 274-277; these read NAGKSS, TDLPGTT, and DTAG. Residue Ser-234 coordinates Mg(2+). K(+)-binding residues include Thr-249, Leu-251, and Thr-254. Thr-255 contacts Mg(2+). Residue Lys-457 coordinates (6S)-5-formyl-5,6,7,8-tetrahydrofolate.

It belongs to the TRAFAC class TrmE-Era-EngA-EngB-Septin-like GTPase superfamily. TrmE GTPase family. In terms of assembly, homodimer. Heterotetramer of two MnmE and two MnmG subunits. Requires K(+) as cofactor.

The protein localises to the cytoplasm. In terms of biological role, exhibits a very high intrinsic GTPase hydrolysis rate. Involved in the addition of a carboxymethylaminomethyl (cmnm) group at the wobble position (U34) of certain tRNAs, forming tRNA-cmnm(5)s(2)U34. This chain is tRNA modification GTPase MnmE, found in Nitratidesulfovibrio vulgaris (strain ATCC 29579 / DSM 644 / CCUG 34227 / NCIMB 8303 / VKM B-1760 / Hildenborough) (Desulfovibrio vulgaris).